A 163-amino-acid polypeptide reads, in one-letter code: Aspartate carbamoyltransferase regulatory chain (163 aa).

Residues C113, C118, C143, and C146 each coordinate Zn(2+).

It belongs to the PyrI family. Contains catalytic and regulatory chains. Requires Zn(2+) as cofactor.

Functionally, involved in allosteric regulation of aspartate carbamoyltransferase. This Caldivirga maquilingensis (strain ATCC 700844 / DSM 13496 / JCM 10307 / IC-167) protein is Aspartate carbamoyltransferase regulatory chain.